The following is a 1233-amino-acid chain: Rho guanine nucleotide exchange factor 10-like protein (1233 aa).

Pro residues predominate over residues Met1–Pro10. Residues Met1–Asn93 are disordered. Positions Glu26 to Thr46 are enriched in acidic residues. The residue at position 40 (Ser40) is a Phosphoserine. The span at Pro72 to Ala89 shows a compositional bias: low complexity. Residues Tyr131 and Tyr152 each carry the phosphotyrosine modification. The interval Gly159–Lys193 is disordered. Positions Glu183–Lys193 are enriched in basic and acidic residues. At Ser240 the chain carries Phosphoserine. The region spanning Val275–Gln462 is the DH domain. The segment covering Gln1089–Gly1104 has biased composition (basic and acidic residues). Disordered regions lie at residues Gln1089 to Arg1117 and Pro1140 to Asp1161.

Interacts with RHOA, RHOB and RHOC.

Its subcellular location is the cytoplasm. Its function is as follows. Acts as a guanine nucleotide exchange factor (GEF) for RHOA, RHOB and RHOC. The polypeptide is Rho guanine nucleotide exchange factor 10-like protein (ARHGEF10L) (Pongo abelii (Sumatran orangutan)).